The primary structure comprises 917 residues: Phosphoenolpyruvate carboxylase (917 aa).

Catalysis depends on residues histidine 145 and lysine 578.

The protein belongs to the PEPCase type 1 family. Mg(2+) serves as cofactor.

It carries out the reaction oxaloacetate + phosphate = phosphoenolpyruvate + hydrogencarbonate. Functionally, forms oxaloacetate, a four-carbon dicarboxylic acid source for the tricarboxylic acid cycle. The protein is Phosphoenolpyruvate carboxylase of Azoarcus sp. (strain BH72).